The primary structure comprises 665 residues: Phosphatidylinositol-3-phosphate phosphatase MTMR1 (665 aa).

Methionine 1 carries the N-acetylmethionine modification. Over residues 1–11 (MDRPAAAAAAG) the composition is skewed to low complexity. Residues 1 to 51 (MDRPAAAAAAGCEGGGGPNPGPAGGRRPPRAAGGATAGSRQPSVETLDSPT) are disordered. Positions 12-24 (CEGGGGPNPGPAG) are enriched in gly residues. A compositionally biased stretch (polar residues) spans 39-51 (SRQPSVETLDSPT). Residues serine 43 and serine 49 each carry the phosphoserine modification. In terms of domain architecture, GRAM spans 90–161 (NKLAQMEEAP…GVISRVEKIG (72 aa)). The Myotubularin phosphatase domain occupies 226–601 (GWKVYDPVSE…SHLELWVNYY (376 aa)). Residues asparagine 351, asparagine 376, and isoleucine 377 each coordinate a 1,2-diacyl-sn-glycero-3-phospho-(1D-myo-inositol-3-phosphate). Cysteine 438 (phosphocysteine intermediate) is an active-site residue. Residues serine 439, aspartate 440, glycine 441, tryptophan 442, aspartate 443, arginine 444, and arginine 484 each contribute to the a 1,2-diacyl-sn-glycero-3-phospho-(1D-myo-inositol-3-phosphate) site. Phosphate is bound at residue serine 439. Phosphate contacts are provided by glycine 441, tryptophan 442, aspartate 443, and arginine 444. Residues 608–665 (MRPQMPIHQNLKELLAVRAELQKRVEGLQREVATRAVSSSSERGSSPSHSATSVHTSV) form a required for dimerization region. Residues 642 to 665 (RAVSSSSERGSSPSHSATSVHTSV) form a disordered region. Residues 645–657 (SSSSERGSSPSHS) show a composition bias toward low complexity.

The protein belongs to the protein-tyrosine phosphatase family. Non-receptor class myotubularin subfamily. As to quaternary structure, homodimer.

The protein resides in the cell membrane. Its subcellular location is the cytoplasm. The catalysed reaction is a 1,2-diacyl-sn-glycero-3-phospho-(1D-myo-inositol-3-phosphate) + H2O = a 1,2-diacyl-sn-glycero-3-phospho-(1D-myo-inositol) + phosphate. It carries out the reaction 1,2-dioctanoyl-sn-glycero-3-phospho-(1-D-myo-inositol-3-phosphate) + H2O = 1,2-dioctanoyl-sn-glycero-3-phospho-(1D-myo-inositol) + phosphate. The enzyme catalyses a 1,2-diacyl-sn-glycero-3-phospho-(1D-myo-inositol-3,5-bisphosphate) + H2O = a 1,2-diacyl-sn-glycero-3-phospho-(1D-myo-inositol-5-phosphate) + phosphate. Lipid phosphatase that specifically dephosphorylates the D-3 position of phosphatidylinositol 3-phosphate, generating phosphatidylinositol. Could also dephosphorylate phosphatidylinositol 3,5-bisphosphate to produce phosphatidylinositol 5-phosphate. The protein is Phosphatidylinositol-3-phosphate phosphatase MTMR1 of Homo sapiens (Human).